The following is a 98-amino-acid chain: Large ribosomal subunit protein bL25 (98 aa).

Residues 1-23 (MANFVLNAQARAEDKQGKGASRR) are disordered.

Belongs to the bacterial ribosomal protein bL25 family. Part of the 50S ribosomal subunit; part of the 5S rRNA/L5/L18/L25 subcomplex. Contacts the 5S rRNA. Binds to the 5S rRNA independently of L5 and L18.

Its function is as follows. This is one of the proteins that binds to the 5S RNA in the ribosome where it forms part of the central protuberance. The sequence is that of Large ribosomal subunit protein bL25 from Acinetobacter baumannii (strain AB307-0294).